The sequence spans 146 residues: Ribosome maturation factor RimP (146 aa).

This sequence belongs to the RimP family.

Its subcellular location is the cytoplasm. In terms of biological role, required for maturation of 30S ribosomal subunits. In Helicobacter pylori (strain HPAG1), this protein is Ribosome maturation factor RimP.